The sequence spans 469 residues: MIPVTSFAGQSVAVFGLGGSGLASCHALKAGGAEVIACDDNLDRMVEAAQAGFITADLRNLPWTNFAALVLTPGVPLTHPAPHWTVLKAQEAGVEVIGDVELFCRERKAHAPRAPFVAITGTNGKSTTTALIAHLLREAGWDTQLGGNIGTAILSLEPPKDGRVHVIEMSSYQIDLTPSLDPTVGILLNVTEDHIDRHGTIEHYAAVKERLVAGVQDGGTSIIGVDDEFGRAAADRIERAGKRVVRMSVQGPVTFGITADLDSIRRVDGGTSTEVAKLGGIGSLRGLHNAQNAAAAAAAVLALGVSPEVLQQGLRSFPGLAHRMEQVGRQVGEQGTTLFVNDSKATNADAAAKALASFGDIFWIAGGKPKTGGIESLAEYFPRIRKAYLIGQAAQEFAATLEGRVPYEISETLEAAVPAAARDAAASGLAEPVVLLSPACASFDQFRNFELRGTRFRELVTALDGVAAV.

121–127 (GTNGKST) contacts ATP.

It belongs to the MurCDEF family.

It is found in the cytoplasm. The catalysed reaction is UDP-N-acetyl-alpha-D-muramoyl-L-alanine + D-glutamate + ATP = UDP-N-acetyl-alpha-D-muramoyl-L-alanyl-D-glutamate + ADP + phosphate + H(+). The protein operates within cell wall biogenesis; peptidoglycan biosynthesis. Functionally, cell wall formation. Catalyzes the addition of glutamate to the nucleotide precursor UDP-N-acetylmuramoyl-L-alanine (UMA). This chain is UDP-N-acetylmuramoylalanine--D-glutamate ligase, found in Rhodopseudomonas palustris (strain ATCC BAA-98 / CGA009).